Reading from the N-terminus, the 366-residue chain is Protein-glutamate methylesterase/protein-glutamine glutaminase (366 aa).

The Response regulatory domain maps to 5–123 (RVLVVDDSVV…SVGRSMEQVR (119 aa)). Position 56 is a 4-aspartylphosphate (Asp-56). The CheB-type methylesterase domain maps to 163–355 (PLGGHRLLVI…PEILRRLARQ (193 aa)). Catalysis depends on residues Ser-175, His-201, and Asp-297.

The protein belongs to the CheB family. Phosphorylated by CheA. Phosphorylation of the N-terminal regulatory domain activates the methylesterase activity.

Its subcellular location is the cytoplasm. The catalysed reaction is [protein]-L-glutamate 5-O-methyl ester + H2O = L-glutamyl-[protein] + methanol + H(+). It catalyses the reaction L-glutaminyl-[protein] + H2O = L-glutamyl-[protein] + NH4(+). Functionally, involved in chemotaxis. Part of a chemotaxis signal transduction system that modulates chemotaxis in response to various stimuli. Catalyzes the demethylation of specific methylglutamate residues introduced into the chemoreceptors (methyl-accepting chemotaxis proteins or MCP) by CheR. Also mediates the irreversible deamidation of specific glutamine residues to glutamic acid. The polypeptide is Protein-glutamate methylesterase/protein-glutamine glutaminase (Nocardioides sp. (strain ATCC BAA-499 / JS614)).